The chain runs to 474 residues: tRNA-2-methylthio-N(6)-dimethylallyladenosine synthase (474 aa).

In terms of domain architecture, MTTase N-terminal spans 3 to 120 (KKLYIKTFGC…LPQMISTRQI (118 aa)). The [4Fe-4S] cluster site is built by cysteine 12, cysteine 49, cysteine 83, cysteine 157, cysteine 161, and cysteine 164. The Radical SAM core domain occupies 143-382 (RTEGVTAFVS…ELQAQAISVR (240 aa)). Positions 381-444 (VRMVGTTQRV…SHTLRGENVR (64 aa)) constitute a TRAM domain.

This sequence belongs to the methylthiotransferase family. MiaB subfamily. As to quaternary structure, monomer. It depends on [4Fe-4S] cluster as a cofactor.

It localises to the cytoplasm. The catalysed reaction is N(6)-dimethylallyladenosine(37) in tRNA + (sulfur carrier)-SH + AH2 + 2 S-adenosyl-L-methionine = 2-methylsulfanyl-N(6)-dimethylallyladenosine(37) in tRNA + (sulfur carrier)-H + 5'-deoxyadenosine + L-methionine + A + S-adenosyl-L-homocysteine + 2 H(+). Functionally, catalyzes the methylthiolation of N6-(dimethylallyl)adenosine (i(6)A), leading to the formation of 2-methylthio-N6-(dimethylallyl)adenosine (ms(2)i(6)A) at position 37 in tRNAs that read codons beginning with uridine. The chain is tRNA-2-methylthio-N(6)-dimethylallyladenosine synthase from Nitrosospira multiformis (strain ATCC 25196 / NCIMB 11849 / C 71).